The primary structure comprises 82 residues: ATP synthase subunit c, chloroplastic (82 aa).

Met1 carries the N-formylmethionine modification. The next 2 helical transmembrane spans lie at 3 to 23 and 57 to 77; these read PIVA…AAIG and FAFM…LLFA.

This sequence belongs to the ATPase C chain family. As to quaternary structure, F-type ATPases have 2 components, F(1) - the catalytic core - and F(0) - the membrane proton channel. F(1) has five subunits: alpha(3), beta(3), gamma(1), delta(1), epsilon(1). F(0) has four main subunits: a(1), b(1), b'(1) and c(10-14). The alpha and beta chains form an alternating ring which encloses part of the gamma chain. F(1) is attached to F(0) by a central stalk formed by the gamma and epsilon chains, while a peripheral stalk is formed by the delta, b and b' chains.

The protein localises to the plastid. It is found in the chloroplast thylakoid membrane. In terms of biological role, f(1)F(0) ATP synthase produces ATP from ADP in the presence of a proton or sodium gradient. F-type ATPases consist of two structural domains, F(1) containing the extramembraneous catalytic core and F(0) containing the membrane proton channel, linked together by a central stalk and a peripheral stalk. During catalysis, ATP synthesis in the catalytic domain of F(1) is coupled via a rotary mechanism of the central stalk subunits to proton translocation. Functionally, key component of the F(0) channel; it plays a direct role in translocation across the membrane. A homomeric c-ring of between 10-14 subunits forms the central stalk rotor element with the F(1) delta and epsilon subunits. In Chlamydomonas reinhardtii (Chlamydomonas smithii), this protein is ATP synthase subunit c, chloroplastic.